A 196-amino-acid polypeptide reads, in one-letter code: Probable GTP-binding protein EngB (196 aa).

Residues 21 to 195 (DVSEICLIGR…YELIDKLLGS (175 aa)) enclose the EngB-type G domain. Residues 29–36 (GRSNVGKS), 56–60 (GKTRL), 75–78 (DAPG), 142–145 (TKLD), and 174–176 (ISN) contribute to the GTP site. Mg(2+) is bound by residues serine 36 and threonine 58.

This sequence belongs to the TRAFAC class TrmE-Era-EngA-EngB-Septin-like GTPase superfamily. EngB GTPase family. The cofactor is Mg(2+).

Necessary for normal cell division and for the maintenance of normal septation. This Mycoplasma mycoides subsp. mycoides SC (strain CCUG 32753 / NCTC 10114 / PG1) protein is Probable GTP-binding protein EngB.